Here is a 185-residue protein sequence, read N- to C-terminus: Ribosome-recycling factor (185 aa).

The protein belongs to the RRF family.

The protein localises to the cytoplasm. Its function is as follows. Responsible for the release of ribosomes from messenger RNA at the termination of protein biosynthesis. May increase the efficiency of translation by recycling ribosomes from one round of translation to another. This chain is Ribosome-recycling factor, found in Kineococcus radiotolerans (strain ATCC BAA-149 / DSM 14245 / SRS30216).